The primary structure comprises 1088 residues: RNA-directed RNA polymerase (1088 aa).

One can recognise a RdRp catalytic domain in the interval 501–687; that stretch reads LSYGDVTRFL…AKRYIAGGKI (187 aa).

This sequence belongs to the reoviridae RNA-directed RNA polymerase family. As to quaternary structure, interacts with VP3 (Potential). Interacts with VP2; this interaction activates VP1. Interacts with NSP5; this interaction is probably necessary for the formation of functional virus factories. Interacts with NSP2; this interaction is weak. The cofactor is Mg(2+).

The protein resides in the virion. The catalysed reaction is RNA(n) + a ribonucleoside 5'-triphosphate = RNA(n+1) + diphosphate. RNA-directed RNA polymerase that is involved in both transcription and genome replication. Together with VP3 capping enzyme, forms an enzyme complex positioned near the channels situated at each of the five-fold vertices of the core. Following infection, the outermost layer of the virus is lost, leaving a double-layered particle (DLP) made up of the core and VP6 shell. VP1 then catalyzes the transcription of fully conservative plus-strand genomic RNAs that are extruded through the DLP's channels into the cytoplasm where they function as mRNAs for translation of viral proteins. One copy of each of the viral (+)RNAs is also recruited during core assembly, together with newly synthesized polymerase complexes and VP2. The polymerase of these novo-formed particles catalyzes the synthesis of complementary minus-strands leading to dsRNA formation. To do so, the polymerase specifically recognizes and binds 4 bases 5'-UGUG-3' in the conserved 3'-sequence of plus-strand RNA templates. VP2 presumably activates the autoinhibited VP1-RNA complex to coordinate packaging and genome replication. Once dsRNA synthesis is complete, the polymerase switches to the transcriptional mode, thus providing secondary transcription. The protein is RNA-directed RNA polymerase of Homo sapiens (Human).